The primary structure comprises 511 residues: GMP synthase [glutamine-hydrolyzing] (511 aa).

The region spanning 5–195 is the Glutamine amidotransferase type-1 domain; sequence DIIVLDFGSQ…AKYICDCEST (191 aa). Catalysis depends on Cys-82, which acts as the Nucleophile. Residues His-169 and Glu-171 contribute to the active site. The 191-residue stretch at 196–386 folds into the GMPS ATP-PPase domain; the sequence is WNMGNFAKIK…LGLSPDLVYR (191 aa). 223–229 serves as a coordination point for ATP; it reads SGGVDSS.

As to quaternary structure, homodimer.

It catalyses the reaction XMP + L-glutamine + ATP + H2O = GMP + L-glutamate + AMP + diphosphate + 2 H(+). It functions in the pathway purine metabolism; GMP biosynthesis; GMP from XMP (L-Gln route): step 1/1. Its function is as follows. Catalyzes the synthesis of GMP from XMP. The chain is GMP synthase [glutamine-hydrolyzing] from Campylobacter hominis (strain ATCC BAA-381 / DSM 21671 / CCUG 45161 / LMG 19568 / NCTC 13146 / CH001A).